The primary structure comprises 935 residues: Protocadherin gamma-A11 (935 aa).

Residues 1–29 form the signal peptide; the sequence is MANRLQRGDRSRLLLLLCIFLGTLRGFRA. Cadherin domains lie at 30–134, 135–243, 244–348, 349–453, 454–563, and 571–677; these read RQIR…APSF, QEDE…IPMF, TQSV…APEI, TITS…PPVF, PHSS…APEI, and DGST…ADLG. Residues 30 to 693 are Extracellular-facing; sequence RQIRYSVPEE…NSETSDLSLY (664 aa). Residue Asn48 is glycosylated (N-linked (GlcNAc...) asparagine). N-linked (GlcNAc...) asparagine glycosylation is found at Asn255, Asn266, Asn420, and Asn546. The chain crosses the membrane as a helical span at residues 694 to 714; the sequence is LVVAVAAVSCIFLVFVIVLLA. The Cytoplasmic segment spans residues 715–935; sequence LRLWRWHKSR…KKKSGKKEKK (221 aa). Disordered stretches follow at residues 805–844 and 905–935; these read CDPTSNQQAPPNTDWRFSQAQRPGTSGSQNGDDTGTWPNN and ATLTNAAGKRDGKAPAGGNGNKKKSGKKEKK. Over residues 807–844 the composition is skewed to polar residues; it reads PTSNQQAPPNTDWRFSQAQRPGTSGSQNGDDTGTWPNN. Over residues 925–935 the composition is skewed to basic residues; sequence NKKKSGKKEKK.

It is found in the cell membrane. Potential calcium-dependent cell-adhesion protein. May be involved in the establishment and maintenance of specific neuronal connections in the brain. This is Protocadherin gamma-A11 (PCDHGA11) from Homo sapiens (Human).